The chain runs to 289 residues: tRNA pseudouridine synthase B (289 aa).

The Nucleophile role is filled by aspartate 38.

The protein belongs to the pseudouridine synthase TruB family. Type 1 subfamily.

The enzyme catalyses uridine(55) in tRNA = pseudouridine(55) in tRNA. Functionally, responsible for synthesis of pseudouridine from uracil-55 in the psi GC loop of transfer RNAs. This is tRNA pseudouridine synthase B from Clostridium acetobutylicum (strain ATCC 824 / DSM 792 / JCM 1419 / IAM 19013 / LMG 5710 / NBRC 13948 / NRRL B-527 / VKM B-1787 / 2291 / W).